Reading from the N-terminus, the 358-residue chain is Holliday junction branch migration complex subunit RuvB (358 aa).

The interval 1–24 (MSIQTDDFAAPPPKRILSGAPASP) is disordered. The segment at 5–194 (TDDFAAPPPK…FGIVARLEFY (190 aa)) is large ATPase domain (RuvB-L). ATP-binding positions include leucine 33, arginine 34, glycine 75, lysine 78, threonine 79, threonine 80, 141–143 (EDY), arginine 184, tyrosine 194, and arginine 231. Threonine 79 serves as a coordination point for Mg(2+). Positions 195–265 (SPEELASIVR…IAHRALVMLD (71 aa)) are small ATPAse domain (RuvB-S). A head domain (RuvB-H) region spans residues 268 to 358 (PQGFDLMDRK…GDMFGAMRPE (91 aa)). Arginine 304, arginine 323, and arginine 328 together coordinate DNA.

Belongs to the RuvB family. In terms of assembly, homohexamer. Forms an RuvA(8)-RuvB(12)-Holliday junction (HJ) complex. HJ DNA is sandwiched between 2 RuvA tetramers; dsDNA enters through RuvA and exits via RuvB. An RuvB hexamer assembles on each DNA strand where it exits the tetramer. Each RuvB hexamer is contacted by two RuvA subunits (via domain III) on 2 adjacent RuvB subunits; this complex drives branch migration. In the full resolvosome a probable DNA-RuvA(4)-RuvB(12)-RuvC(2) complex forms which resolves the HJ.

It is found in the cytoplasm. The catalysed reaction is ATP + H2O = ADP + phosphate + H(+). Functionally, the RuvA-RuvB-RuvC complex processes Holliday junction (HJ) DNA during genetic recombination and DNA repair, while the RuvA-RuvB complex plays an important role in the rescue of blocked DNA replication forks via replication fork reversal (RFR). RuvA specifically binds to HJ cruciform DNA, conferring on it an open structure. The RuvB hexamer acts as an ATP-dependent pump, pulling dsDNA into and through the RuvAB complex. RuvB forms 2 homohexamers on either side of HJ DNA bound by 1 or 2 RuvA tetramers; 4 subunits per hexamer contact DNA at a time. Coordinated motions by a converter formed by DNA-disengaged RuvB subunits stimulates ATP hydrolysis and nucleotide exchange. Immobilization of the converter enables RuvB to convert the ATP-contained energy into a lever motion, pulling 2 nucleotides of DNA out of the RuvA tetramer per ATP hydrolyzed, thus driving DNA branch migration. The RuvB motors rotate together with the DNA substrate, which together with the progressing nucleotide cycle form the mechanistic basis for DNA recombination by continuous HJ branch migration. Branch migration allows RuvC to scan DNA until it finds its consensus sequence, where it cleaves and resolves cruciform DNA. The chain is Holliday junction branch migration complex subunit RuvB from Albidiferax ferrireducens (strain ATCC BAA-621 / DSM 15236 / T118) (Rhodoferax ferrireducens).